A 209-amino-acid chain; its full sequence is Uracil phosphoribosyltransferase (209 aa).

Residues R79, R104, and 131-139 contribute to the 5-phospho-alpha-D-ribose 1-diphosphate site; that span reads DPMLATGGS. Uracil is bound by residues I194 and 199-201; that span reads GDA. D200 is a binding site for 5-phospho-alpha-D-ribose 1-diphosphate.

The protein belongs to the UPRTase family. It depends on Mg(2+) as a cofactor.

The enzyme catalyses UMP + diphosphate = 5-phospho-alpha-D-ribose 1-diphosphate + uracil. It functions in the pathway pyrimidine metabolism; UMP biosynthesis via salvage pathway; UMP from uracil: step 1/1. Allosterically activated by GTP. Functionally, catalyzes the conversion of uracil and 5-phospho-alpha-D-ribose 1-diphosphate (PRPP) to UMP and diphosphate. The sequence is that of Uracil phosphoribosyltransferase from Exiguobacterium sp. (strain ATCC BAA-1283 / AT1b).